Here is a 497-residue protein sequence, read N- to C-terminus: uncharacterized protein (497 aa).

266 to 273 (GIQGTGKS) lines the ATP pocket.

This sequence belongs to the AAA ATPase family. Highly divergent.

It is found in the plastid. The protein localises to the chloroplast. This is an uncharacterized protein from Trieres chinensis (Marine centric diatom).